Reading from the N-terminus, the 329-residue chain is L-arabinose-binding periplasmic protein (329 aa).

Positions 1-23 (MHKFTKALAAIGLAAVMSQSAMA) are cleaved as a signal peptide.

Belongs to the bacterial solute-binding protein 2 family.

The protein localises to the periplasm. Its function is as follows. Involved in the high-affinity L-arabinose membrane transport system. Binds with high affinity to arabinose, but can also bind D-galactose (approximately 2-fold reduction) and D-fucose (approximately 40-fold reduction). This Escherichia coli (strain K12) protein is L-arabinose-binding periplasmic protein (araF).